Here is a 1059-residue protein sequence, read N- to C-terminus: Carbamoyl phosphate synthase large chain (1059 aa).

The tract at residues 1-401 (MPKRTDIKKI…SLLKACRSLE (401 aa)) is carboxyphosphate synthetic domain. ATP contacts are provided by Arg-129, Arg-169, Gly-175, Gly-176, Arg-208, Ile-210, Glu-215, Gly-241, Ile-242, His-243, Gln-284, and Glu-298. The 195-residue stretch at 133–327 (KQLMEDLEQP…IAKLAAKIAV (195 aa)) folds into the ATP-grasp 1 domain. 3 residues coordinate Mg(2+): Gln-284, Glu-298, and Asn-300. Mn(2+)-binding residues include Gln-284, Glu-298, and Asn-300. Residues 402–546 (IGVYHNEMPE…YSTYEWENES (145 aa)) are oligomerization domain. Positions 547–929 (IKSEKESVIV…ALYKAFEASY (383 aa)) are carbamoyl phosphate synthetic domain. One can recognise an ATP-grasp 2 domain in the interval 671–861 (EQALKDLNIP…MAQIATKLIL (191 aa)). Arg-707, Ser-746, Leu-748, Glu-752, Gly-777, Val-778, His-779, Ser-780, Gln-820, and Glu-832 together coordinate ATP. Gln-820, Glu-832, and Asn-834 together coordinate Mg(2+). Residues Gln-820, Glu-832, and Asn-834 each contribute to the Mn(2+) site. An MGS-like domain is found at 930–1059 (FHLPAFGNVI…ESRGFITQAI (130 aa)). The tract at residues 930 to 1059 (FHLPAFGNVI…ESRGFITQAI (130 aa)) is allosteric domain.

The protein belongs to the CarB family. Composed of two chains; the small (or glutamine) chain promotes the hydrolysis of glutamine to ammonia, which is used by the large (or ammonia) chain to synthesize carbamoyl phosphate. Tetramer of heterodimers (alpha,beta)4. Mg(2+) is required as a cofactor. Requires Mn(2+) as cofactor.

It catalyses the reaction hydrogencarbonate + L-glutamine + 2 ATP + H2O = carbamoyl phosphate + L-glutamate + 2 ADP + phosphate + 2 H(+). The catalysed reaction is hydrogencarbonate + NH4(+) + 2 ATP = carbamoyl phosphate + 2 ADP + phosphate + 2 H(+). It participates in amino-acid biosynthesis; L-arginine biosynthesis; carbamoyl phosphate from bicarbonate: step 1/1. Its pathway is pyrimidine metabolism; UMP biosynthesis via de novo pathway; (S)-dihydroorotate from bicarbonate: step 1/3. Its function is as follows. Large subunit of the glutamine-dependent carbamoyl phosphate synthetase (CPSase). CPSase catalyzes the formation of carbamoyl phosphate from the ammonia moiety of glutamine, carbonate, and phosphate donated by ATP, constituting the first step of 2 biosynthetic pathways, one leading to arginine and/or urea and the other to pyrimidine nucleotides. The large subunit (synthetase) binds the substrates ammonia (free or transferred from glutamine from the small subunit), hydrogencarbonate and ATP and carries out an ATP-coupled ligase reaction, activating hydrogencarbonate by forming carboxy phosphate which reacts with ammonia to form carbamoyl phosphate. In Streptococcus mutans serotype c (strain ATCC 700610 / UA159), this protein is Carbamoyl phosphate synthase large chain.